Here is a 267-residue protein sequence, read N- to C-terminus: Acryloyl-CoA reductase electron transfer subunit gamma (267 aa).

As to quaternary structure, heterohexadecamer; tetramer of tetramers. Each tetramer is composed of 2 alpha (AcrC), a beta (AcrA) and a gamma (AcrB) subunit.

The protein localises to the cytoplasm. Part of the ETF-acryloyl-CoA reductase complex involved in the pathway of L-alanine fermentation. The electron transfer flavoprotein (ETF) serves as a specific electron acceptor for acryloyl-CoA reductase. The sequence is that of Acryloyl-CoA reductase electron transfer subunit gamma (acrB) from Anaerotignum propionicum (Clostridium propionicum).